A 305-amino-acid chain; its full sequence is MAREDSVKCLRCLLYALNLLFWLMSISVLAVSAWMRDYLNNVLTLTAETRVEEAVILTYFPVVHPVMIAVCCFLIIVGMLGYCGTVKRNLLLLAWYFGSLLVIFCVELACGVWTYEQEIMVPVQWSDMVTLKARMTNYGLPRYRWLTHAWNFFQREFKCCGVVYFTDWLEMTEMDWPPDSCCVREFPGCSKQAHQEDLSDLYQEGCGKKMYSFLRGTKQLQVLRFLGISIGVTQILAMILTITLLWALYYDRREPGTDQMMALKNDTTQHLPCHSVELLKPSLSRIFEHTSMANSFNTHFEMEEL.

The Cytoplasmic portion of the chain corresponds to 1-12 (MAREDSVKCLRC). S-palmitoyl cysteine attachment occurs at residues C9 and C12. A helical membrane pass occupies residues 13–33 (LLYALNLLFWLMSISVLAVSA). Residues 34 to 59 (WMRDYLNNVLTLTAETRVEEAVILTY) are Extracellular-facing. The chain crosses the membrane as a helical span at residues 60-80 (FPVVHPVMIAVCCFLIIVGML). Residues 81 to 89 (GYCGTVKRN) are Cytoplasmic-facing. The S-palmitoyl cysteine moiety is linked to residue C83. A helical membrane pass occupies residues 90–110 (LLLLAWYFGSLLVIFCVELAC). The Extracellular portion of the chain corresponds to 111 to 224 (GVWTYEQEIM…RGTKQLQVLR (114 aa)). Residues 225–245 (FLGISIGVTQILAMILTITLL) traverse the membrane as a helical segment. At 246-305 (WALYYDRREPGTDQMMALKNDTTQHLPCHSVELLKPSLSRIFEHTSMANSFNTHFEMEEL) the chain is on the cytoplasmic side.

The protein belongs to the tetraspanin (TM4SF) family. In terms of assembly, component of a complex, at least composed of TSPAN12, FZD4 and norrin (NDP). Interacts (when palmitoylated) with ADAM10. Interacts with MMP14/MT1-MMP. In terms of processing, palmitoylated; required for interaction with ADAM10. The precise position of palmitoylated residues is unclear and occurs either on Cys-9, Cys-12 and/or Cys-83.

It is found in the cell membrane. In terms of biological role, regulator of cell surface receptor signal transduction. Plays a central role in retinal vascularization by regulating norrin (NDP) signal transduction. Acts in concert with norrin (NDP) to promote FZD4 multimerization and subsequent activation of FZD4, leading to promote accumulation of beta-catenin (CTNNB1) and stimulate LEF/TCF-mediated transcriptional programs. Suprisingly, it only activates the norrin (NDP)-dependent activation of FZD4, while it does not activate the Wnt-dependent activation of FZD4, suggesting the existence of a Wnt-independent signaling that also promote accumulation the beta-catenin (CTNNB1). Acts as a regulator of membrane proteinases such as ADAM10 and MMP14/MT1-MMP. Activates ADAM10-dependent cleavage activity of amyloid precursor protein (APP). Activates MMP14/MT1-MMP-dependent cleavage activity. The polypeptide is Tetraspanin-12 (TSPAN12) (Bos taurus (Bovine)).